Consider the following 223-residue polypeptide: Putative 3-methyladenine DNA glycosylase (223 aa).

This sequence belongs to the DNA glycosylase MPG family.

This is Putative 3-methyladenine DNA glycosylase from Rhodococcus jostii (strain RHA1).